Consider the following 163-residue polypeptide: Nucleotide-binding protein CJE0423 (163 aa).

This sequence belongs to the YajQ family.

Its function is as follows. Nucleotide-binding protein. The polypeptide is Nucleotide-binding protein CJE0423 (Campylobacter jejuni (strain RM1221)).